We begin with the raw amino-acid sequence, 156 residues long: Small ribosomal subunit protein uS7 (156 aa).

It belongs to the universal ribosomal protein uS7 family. As to quaternary structure, part of the 30S ribosomal subunit. Contacts proteins S9 and S11.

In terms of biological role, one of the primary rRNA binding proteins, it binds directly to 16S rRNA where it nucleates assembly of the head domain of the 30S subunit. Is located at the subunit interface close to the decoding center, probably blocks exit of the E-site tRNA. The protein is Small ribosomal subunit protein uS7 of Clavibacter sepedonicus (Clavibacter michiganensis subsp. sepedonicus).